The chain runs to 353 residues: MTAILERRESESLWGRFCNWITSTENRLYIGWFGVLMIPTLLTATSVFIIAFIAAPPVDIDGIREPVSGSLLYGNNIISGAIIPTSAAIGLHFYPIWEAASVDEWLYNGGPYELIVLHFLLGVACYMGREWELSFRLGMRPWIAVAYSAPVAAATAVFLIYPIGQGSFSDGMPLGISGTFNFMIVFQAEHNILMHPFHMLGVAGVFGGSLFSAMHGSLVTSSLIRETTENESANEGYRFGQEEETYNIVAAHGYFGRLIFQYASFNNSRSLHFFLTAWPVVGIWFTALGISTMAFNLNGFNFNQSVVDSQGRVINTWADIINRANLGMEVMHERNAHNFPLDLAAVEAPSTNG.

The residue at position 2 (T2) is an N-acetylthreonine. T2 carries the post-translational modification Phosphothreonine. 3 consecutive transmembrane segments (helical) span residues 29–46, 118–133, and 142–156; these read YIGWFGVLMIPTLLTATS, HFLLGVACYMGREWEL, and WIAVAYSAPVAAATA. Chlorophyll a is bound at residue H118. Y126 serves as a coordination point for pheophytin a. 2 residues coordinate [CaMn4O5] cluster: D170 and E189. Residues 197–218 form a helical membrane-spanning segment; sequence FHMLGVAGVFGGSLFSAMHGSL. Residue H198 participates in chlorophyll a binding. A quinone-binding positions include H215 and 264-265; that span reads SF. Fe cation is bound at residue H215. Residue H272 coordinates Fe cation. The chain crosses the membrane as a helical span at residues 274–288; sequence FLTAWPVVGIWFTAL. H332, E333, D342, and A344 together coordinate [CaMn4O5] cluster. The propeptide occupies 345-353; it reads AVEAPSTNG.

This sequence belongs to the reaction center PufL/M/PsbA/D family. As to quaternary structure, PSII is composed of 1 copy each of membrane proteins PsbA, PsbB, PsbC, PsbD, PsbE, PsbF, PsbH, PsbI, PsbJ, PsbK, PsbL, PsbM, PsbT, PsbX, PsbY, PsbZ, Psb30/Ycf12, at least 3 peripheral proteins of the oxygen-evolving complex and a large number of cofactors. It forms dimeric complexes. The cofactor is The D1/D2 heterodimer binds P680, chlorophylls that are the primary electron donor of PSII, and subsequent electron acceptors. It shares a non-heme iron and each subunit binds pheophytin, quinone, additional chlorophylls, carotenoids and lipids. D1 provides most of the ligands for the Mn4-Ca-O5 cluster of the oxygen-evolving complex (OEC). There is also a Cl(-1) ion associated with D1 and D2, which is required for oxygen evolution. The PSII complex binds additional chlorophylls, carotenoids and specific lipids.. In terms of processing, tyr-161 forms a radical intermediate that is referred to as redox-active TyrZ, YZ or Y-Z. Post-translationally, C-terminally processed by CTPA; processing is essential to allow assembly of the oxygen-evolving complex and thus photosynthetic growth.

The protein localises to the plastid. The protein resides in the chloroplast thylakoid membrane. It carries out the reaction 2 a plastoquinone + 4 hnu + 2 H2O = 2 a plastoquinol + O2. Photosystem II (PSII) is a light-driven water:plastoquinone oxidoreductase that uses light energy to abstract electrons from H(2)O, generating O(2) and a proton gradient subsequently used for ATP formation. It consists of a core antenna complex that captures photons, and an electron transfer chain that converts photonic excitation into a charge separation. The D1/D2 (PsbA/PsbD) reaction center heterodimer binds P680, the primary electron donor of PSII as well as several subsequent electron acceptors. The protein is Photosystem II protein D1 of Barbarea verna (Land cress).